The sequence spans 147 residues: Austinoid biosynthesis cluster protein H (147 aa).

This sequence belongs to the trt14 isomerase family. As to quaternary structure, homodimer.

Its pathway is secondary metabolite biosynthesis; terpenoid biosynthesis. Functionally, part of the gene cluster that mediates the biosynthesis of calidodehydroaustin, a fungal meroterpenoid. The first step of the pathway is the synthesis of 3,5-dimethylorsellinic acid by the polyketide synthase ausA. 3,5-dimethylorsellinic acid is then prenylated by the polyprenyl transferase ausN. Further epoxidation by the FAD-dependent monooxygenase ausM and cyclization by the probable terpene cyclase ausL lead to the formation of protoaustinoid A. Protoaustinoid A is then oxidized to spiro-lactone preaustinoid A3 by the combined action of the FAD-binding monooxygenases ausB and ausC, and the dioxygenase ausE. Acid-catalyzed keto-rearrangement and ring contraction of the tetraketide portion of preaustinoid A3 by ausJ lead to the formation of preaustinoid A4. The aldo-keto reductase ausK, with the help of ausH, is involved in the next step by transforming preaustinoid A4 into isoaustinone which is in turn hydroxylated by the P450 monooxygenase ausI to form austinolide. The cytochrome P450 monooxygenase ausG modifies austinolide to austinol. Austinol is further acetylated to austin by the O-acetyltransferase ausP, which spontaneously changes to dehydroaustin. The cytochrome P450 monooxygenase ausR then converts dehydroaustin is into 7-dehydrodehydroaustin. The hydroxylation catalyzed by ausR permits the O-acetyltransferase ausQ to add an additional acetyl group to the molecule, leading to the formation of acetoxydehydroaustin. The short chain dehydrogenase ausT catalyzes the reduction of the double bond present between carbon atoms 1 and 2 to convert 7-dehydrodehydroaustin into 1,2-dihydro-7-hydroxydehydroaustin. AusQ catalyzes not only an acetylation reaction but also the addition of the PKS ausV diketide product to 1,2-dihydro-7-hydroxydehydroaustin, forming precalidodehydroaustin. Finally, the iron/alpha-ketoglutarate-dependent dioxygenase converts precalidodehydroaustin into calidodehydroaustin. The sequence is that of Austinoid biosynthesis cluster protein H from Aspergillus calidoustus.